A 268-amino-acid polypeptide reads, in one-letter code: 4-hydroxy-tetrahydrodipicolinate reductase (268 aa).

NAD(+) contacts are provided by residues 8–13 and E34; that span reads GAAGRM. R35 is a binding site for NADP(+). NAD(+)-binding positions include 96-98 and 120-123; these read GST and SPNM. H153 acts as the Proton donor/acceptor in catalysis. H154 is a binding site for (S)-2,3,4,5-tetrahydrodipicolinate. Residue K157 is the Proton donor of the active site. 163-164 serves as a coordination point for (S)-2,3,4,5-tetrahydrodipicolinate; the sequence is GT.

The protein belongs to the DapB family.

Its subcellular location is the cytoplasm. It carries out the reaction (S)-2,3,4,5-tetrahydrodipicolinate + NAD(+) + H2O = (2S,4S)-4-hydroxy-2,3,4,5-tetrahydrodipicolinate + NADH + H(+). The enzyme catalyses (S)-2,3,4,5-tetrahydrodipicolinate + NADP(+) + H2O = (2S,4S)-4-hydroxy-2,3,4,5-tetrahydrodipicolinate + NADPH + H(+). The protein operates within amino-acid biosynthesis; L-lysine biosynthesis via DAP pathway; (S)-tetrahydrodipicolinate from L-aspartate: step 4/4. Functionally, catalyzes the conversion of 4-hydroxy-tetrahydrodipicolinate (HTPA) to tetrahydrodipicolinate. This is 4-hydroxy-tetrahydrodipicolinate reductase from Anaeromyxobacter sp. (strain Fw109-5).